The sequence spans 248 residues: Homeobox-leucine zipper protein HOX15 (248 aa).

Positions 1–44 are disordered; it reads MAQDDEDVGLALGLSLGSGGHRRQRESRDEAPSSAAASLLTLRL. Residues 32 to 44 show a composition bias toward low complexity; that stretch reads PSSAAASLLTLRL. The homeobox DNA-binding region spans 91 to 150; sequence NSRKKLRLSKEQSALLEDRFKEHSTLNPKQKVALAKQLNLRPRQVEVWFQNRRARTKLKQ. Residues 149-193 are leucine-zipper; that stretch reads KQTEVDCELLKRCCETLTEENRRLHRELQQLRALTHSTAAGFFMA. A disordered region spans residues 223–248; that stretch reads PTAAADRTNKPTAPHLFSPFAKSAAC.

Belongs to the HD-ZIP homeobox family. Class II subfamily. As to expression, expressed in seedlings, stems, leaf blades and panicles.

It is found in the nucleus. Its function is as follows. Probable transcription factor. This chain is Homeobox-leucine zipper protein HOX15 (HOX15), found in Oryza sativa subsp. indica (Rice).